A 157-amino-acid polypeptide reads, in one-letter code: S-ribosylhomocysteine lyase (157 aa).

Residues His-60, His-64, and Cys-127 each contribute to the Fe cation site.

Belongs to the LuxS family. Homodimer. The cofactor is Fe cation.

It carries out the reaction S-(5-deoxy-D-ribos-5-yl)-L-homocysteine = (S)-4,5-dihydroxypentane-2,3-dione + L-homocysteine. In terms of biological role, involved in the synthesis of autoinducer 2 (AI-2) which is secreted by bacteria and is used to communicate both the cell density and the metabolic potential of the environment. The regulation of gene expression in response to changes in cell density is called quorum sensing. Catalyzes the transformation of S-ribosylhomocysteine (RHC) to homocysteine (HC) and 4,5-dihydroxy-2,3-pentadione (DPD). The protein is S-ribosylhomocysteine lyase of Helicobacter acinonychis (strain Sheeba).